Consider the following 360-residue polypeptide: MILDRLNFIENKYDELSVKISDPSIMANQKEWRKLCKEHADLEVIVNKYKEYKEATEELEANKEMLSEESDQEMREMINSEIKDLTERKKELEDEIQILLLPKDPNDDKNVFVEIRGGAGGDEAALFAANLFRMYTKYAEKNRWKVELMSANETDIGGFKEVVFMIKGAGAYSKLKYESGAHRVQRVPDTESSGRIHTSTATVAVLPEVDDVEIEINDKDIKIDVFRASGNGGQCVNTTDSAVRITHLPSGLVVSCQDEKSQLKNKEKAMKVLRARLFEQAEAERLAGIAEDRKSQVGTGDRSERIRTYNYPQGRVTDHRINMTLYKLDSFLEGDIDEILNALITEDQAQKMKAMGNTEF.

The residue at position 234 (Gln234) is an N5-methylglutamine.

This sequence belongs to the prokaryotic/mitochondrial release factor family. Post-translationally, methylated by PrmC. Methylation increases the termination efficiency of RF1.

Its subcellular location is the cytoplasm. Its function is as follows. Peptide chain release factor 1 directs the termination of translation in response to the peptide chain termination codons UAG and UAA. The polypeptide is Peptide chain release factor 1 (Clostridium perfringens (strain 13 / Type A)).